The chain runs to 71 residues: UPF0346 protein SMU_1621c (71 aa).

This sequence belongs to the UPF0346 family.

The chain is UPF0346 protein SMU_1621c from Streptococcus mutans serotype c (strain ATCC 700610 / UA159).